Here is a 153-residue protein sequence, read N- to C-terminus: Putative ubiquitin-conjugating enzyme E2 N-like (153 aa).

The UBC core domain occupies 3–150; that stretch reads ELPHRIIKET…ARAWTRLYAM (148 aa). An N6-acetyllysine modification is found at Lys-83.

Belongs to the ubiquitin-conjugating enzyme family. As to expression, expressed in epididymis (at protein level).

In Homo sapiens (Human), this protein is Putative ubiquitin-conjugating enzyme E2 N-like (UBE2NL).